A 9439-amino-acid polypeptide reads, in one-letter code: Extracellular matrix-binding protein ebh (9439 aa).

30 consecutive FIVAR domains span residues Ala1815–Ala1871, Ala1901–Ala1957, Ala1985–Ala2041, Ala2071–Glu2127, Ala2155–Ala2211, Ala2241–Glu2297, Ala2325–Ala2381, Ala2411–Asn2467, Asp2488–Ala2551, Ala2581–Ile2638, Ala2665–Asn2720, Ala2748–Glu2804, Ala2832–Ala2888, Ala2918–Ala2974, Ala3002–Ala3058, Ala3088–Glu3144, Ala3172–Ala3228, Ala3258–Glu3314, Asp3335–Ala3398, Ala3428–Glu3484, Ala3512–Asn3567, Ile3595–Ser3650, Ala3678–Asn3733, Ser3802–Lys3860, Ala3928–Ala3983, Ala4056–Lys4114, Ser4182–Ala4240, Ala4308–Lys4365, Val4433–Ala4491, and Ser4559–Thr4617. Residues Glu2495–Asn2507 are compositionally biased toward basic and acidic residues. Residues Glu2495–Ser2514 form a disordered region. Residues Ala2925–Gln2938 show a composition bias toward polar residues. The segment at Ala2925 to Gln2951 is disordered. The tract at residues Gly4649–Glu4674 is disordered. 14 FIVAR domains span residues Ala4685 to Lys4743, Ala4811 to Ala4869, Ala4937 to Ala4995, Ala5063 to Lys5115, Ala5189 to Leu5246, Leu5314 to Ala5372, Ala5440 to Ala5498, Ala5566 to Ala5624, Ala5692 to Thr5750, Asp5818 to Leu5875, Ala5943 to Ala6000, Lys6068 to Thr6126, Ala6194 to Ile6252, and Glu6320 to Ala6378. The span at Gln5699–Phe5712 shows a compositional bias: polar residues. The interval Gln5699–Lys5719 is disordered. The disordered stretch occupies residues Asn6413 to Ser6434. 18 FIVAR domains span residues Ala6446–Ala6504, Ala6572–Ala6630, Ser6698–Ala6755, Thr6823–Glu6877, Ala6949–Ile7007, Ser7075–Ala7133, Asp7201–Ala7259, Ala7327–Leu7384, Ala7452–Ala7510, Ala7578–Ile7636, Ala7704–Val7762, Ala7830–Ala7888, Val7956–Ala8010, Ile8078–Phe8137, Ala8205–Leu8264, Ala8332–Leu8391, Lys8459–Leu8518, and Ala8587–Ile8643. A helical transmembrane segment spans residues Thr9306–Ala9324. Basic and acidic residues-rich tracts occupy residues Asp9363–Ser9375, Glu9386–His9395, and Gln9404–Gln9413. The segment at Asp9363–Lys9439 is disordered. Residues Lys9414 to Lys9439 show a composition bias toward basic residues.

The protein localises to the cell membrane. The sequence is that of Extracellular matrix-binding protein ebh (ebh) from Staphylococcus epidermidis (strain ATCC 12228 / FDA PCI 1200).